The chain runs to 154 residues: Protein MoxZ (154 aa).

In Paracoccus denitrificans, this protein is Protein MoxZ (moxZ).